A 377-amino-acid polypeptide reads, in one-letter code: Odorant receptor 30a (377 aa).

Over 1 to 34 the chain is Cytoplasmic; sequence MELKSMDPVEMPIFGSTLKLMKFWSYLFVHNWRR. Residues 35–55 traverse the membrane as a helical segment; sequence YVAMTPYIIINCTQYVDIYLS. At 56–65 the chain is on the extracellular side; sequence TESLDFIIRN. A helical transmembrane segment spans residues 66-86; sequence VYLAVLFTNTVVRGVLLCVQR. At 87–127 the chain is on the cytoplasmic side; that stretch reads FSYERFINILKSFYIELLQSDDPIINILVKETTRLSVLISR. Residues 128-148 form a helical membrane-spanning segment; it reads INLLMGCCTCIGFVTYPIFGS. Residues 149-172 are Extracellular-facing; the sequence is ERVLPYGMYLPTIDEYKYASPYYE. A helical transmembrane segment spans residues 173 to 193; that stretch reads IFFVIQAIMAPMGCCMYIPYT. The Cytoplasmic portion of the chain corresponds to 194–254; sequence NMVVTFTLFA…SMNALNTHLH (61 aa). Residues 255 to 275 traverse the membrane as a helical segment; sequence LVEFLCFGAMLCVLLFSLIIA. The Extracellular portion of the chain corresponds to 276–280; sequence QTIAQ. Residues 281–301 form a helical membrane-spanning segment; sequence TVIVIAYMVMIFANSVVLYYV. Residues 302–344 lie on the Cytoplasmic side of the membrane; it reads ANELYFQSFDIAIAAYESNWMDFDVDTQKTLKFLIMRSQKPLA. Residues 345–365 traverse the membrane as a helical segment; the sequence is ILVGGTYPMNLKMLQSLLNAI. The Extracellular segment spans residues 366–377; sequence YSFFTLLRRVYG.

Belongs to the insect chemoreceptor superfamily. Heteromeric odorant receptor channel (TC 1.A.69) family. Or30a subfamily. As to quaternary structure, interacts with Orco. Complexes exist early in the endomembrane system in olfactory sensory neurons (OSNs), coupling these complexes to the conserved ciliary trafficking pathway.

Its subcellular location is the cell membrane. Functionally, odorant receptor which mediates acceptance or avoidance behavior, depending on its substrates. The odorant receptor repertoire encodes a large collection of odor stimuli that vary widely in identity, intensity, and duration. May form a complex with Orco to form odorant-sensing units, providing sensitive and prolonged odorant signaling and calcium permeability. Involved in the behavioral responses to propyl acetate and anisole. The sequence is that of Odorant receptor 30a (Or30a) from Drosophila melanogaster (Fruit fly).